The chain runs to 4814 residues: MHSAAAGLGLSVLNPSPTILPGPTLLHQLVRPACDHIALEHLCKGEITKFSYKSLHDASDALASQIAQSCVSVHGQLIVPVLLQQCPDLYITLLAILKAGGAFCPLNLDAPAERVQFILKDVGAKVVITSPELSARIPRDAGVELLYASDSYEAIVQHHQAVTRQITPHNYAYVMYTSGSTGTPKGVSISHSAATQALLAHDAHIPRFSRFFQFAAPTFDVSVFEIFFPLFRGETLISASRQETLDDLPAVLRQASVDACELTPTVAASLLRKRENAPQLKLLLTIGEMLNPLVVKEFGGTTDRGSILWAMYGPTEATIHCTLQGDFQSNYSTGNIGIPPETVSCFIIKPAADDYDPTSFDLLPAGDVGELAVGGHQLASGYLNDELKTNKAFIESPYGRVYRTGDKAKMNQDGTLECLGRISDGQVKLRGQRIELGEIEHAAMKTSGCHGAAARVIGGILVLFCAVDACVSEVDILQSCSQWLPQFMIPGDVVLSEELPRLPSGKVNAKELQRQFEQSKAQEGQSADLKKSTEPELLQVLQDCFGSQLSLQTELARAGLDSLTAIGLSSDLRDAGYDVRAVSLLKMKTIGHLVSSIKIIDEADGDNEGTRTSVSCLEKLAELKSKELKLEMSYRNVQDIIPCTNLQIAMLSESIRNPGAYWNAVDLELSTTAAAEDICRAIHAIVEQNEILRTGFVQHDSTIYSVIFDAINSDCVRIADEMELVPPKKSNPDLLRPLQIRIKKGAKGNSYNMQVHLHHAIYDGWSLDLFKSDLARAIGSEGLPSRNQFRDMVAFSLSQKREQYDEKARVFWADYLFGWNKPPFPRLIPRAVPCGTIQSKTYRHSLPSSANQAYNGSAQVPFQAALSLVWGGILGLQDVVIGSVTSGRTIPVKGVENIMGPCISSLPLRVNMERMNTIDDLVNSISSSNRHMMEHSTLSQLAVKKSINMYGAEQLYDVLFVYQESLEQRKQTGSIVQEIAHLDRLETKLVLEVQPIQDAVVLQATFHDDYFSSESVEKILSQVAEISSAILENPHSLLESMRSMETDVSTYNMKLEKMDRDSQPDNLAGVVERAATRFGDRTAVSFATQSSATTMEATNITYTDLNRNANCIAHFLLSQKVQSGEVIPIIMNKSIRLYTTILGIIKAGCGYLPLLPSTPNARILEIFNQSGSRLCLADEDSISNIPPSTTVRTILIDEESMEDYPVENPSIDINSSNTAYVIYTSGTTGTPKGVTVSHKNIASNVTYLGVEYPDSAKASSNFLQACSQAFDVSVFEIFFAWHKGMCLCAASNDVLFADIEEAIRQFEITHLSLTPTIASLIDPSNVPSVEFLVTAGEPMTNAVSERWNKYLWQGYGPSETTNICSVKKMSSDDYIEHLGLVFNNTSVAVLQPKGLSTLPIGWAGEFCFGGDQVATGYLNMPRLTAEKFIQHPKYSRLYRSGDFGRMLPDGSLVILGRIDDQVKLRGQRIEAAEINGIVSRVSSATAAVTLVLKQIDSMGEWLVTFYVQDKDAEDFRILEPNASAHHQIFAELHAKLLSYMVPSYLIPVSRIPLTSSGKVDKRAINTTFTQLSKDYLKTVAHNSVKEDDEDWNDTEQAIASLIAASLKISRNDIGRWTPLAILGLDSLSAIQVSRSLTNEFRTTVSISCILQHPTIAQLARKLHSSHESGDVAIVNDFFSQEFQQSVTAVLAEENKEVVEILPCSPLQEAMVSRGKTSYYNKSLLRLHIDPYKMRGYWQHMCERHSILRTCFMATNSSSYPIAQVSLAKWELPWHEFTVTQPSLEDAIRDHLALVPEPLETNTPPLSLALIRYGEIRFLSFICHHALYDGVAMECLWREVESLARGEQLRPSVAQGPFISEIMKLPSTSQTFWKQQFSNFQPSVLFRKPNGKAVQQATHSLTVERSLHKTQHQIKSLGISLLALCQATMARLLAVVSQKSDVCFGNVMNGRTIGLEGIERLVAPCFNTVPIRQDMPDTLSNIDLAKSLLALNTSMLEHQFTPLRQVQKIAATERRSLFDSLLLVQQPLQEMDVNVWTLEEDAGVMDLPLVCEITPCPNLNTLVLDVHYDMSAVPHVAAAGIASLFEHILLQILESPHAVLARRSIPEPLLEQVHLRQPFFFDDSEDQYETEDSDSSWTDEELAVRAVLSELSQTPTQRIDRTTSLFKLGLDSINAVQVAAILRQKDYSISASDIVECQNCSKIARRIFENGYQPKKEIELHDFAAFDVQVRPELDIAGNGYRLLPCTPMQSAMLSAYVSSNGVHYLNEISLEMDKEITAPLVAEKWAQLVAVHAMLRTGFASVRHADSAYAMIQYESVQSERFIHVDNGGFKPRDWKASEANSIQKSWNLPPWRLGVTTKNGAVNVYLIIHHALYDATSLQELLSNFGRLLNSNKTLPVEDVDTGLSAVLHRTAGEQEEASAFWRQLGEQATINRFPLLTPLREANREILIEEMTSTLTSPDLHQMTKSLEISVQTAILASWSRLLAAYTGEEAVIFGVTFSGRSCEATLGTPVPCLTTVPVVAQNLGSNRDLLSQMMRTASDIYQHQYLPLNRIQKEMGYPATALFDTLVAYQKIESEANDRPWVQKQDDAAAEFPVSLEVEPRDDDSICLRITYFSDILPSDQAKLLLRQFDATMEDLLVNPDGHQHDLHNYHPDIFAISPPLEPTMNAPVELLHQFVEVQAKLNPDKIALEHVSGFRGKEPIRDQWTFAQLNSIGNKVANMLSSRTEAGSIIAIHFDKCPEAYFAILGILKSGSAFVALDFSAPSARKQFILQDSRAPCLLTSEDNVIEFEVPCPVIVIDNALLSDYAETPCEVNNTLTPSSTCYCLYTSGTTGTPKGCEITHENTVQCMMAFQDLFHGHWADDSRWLQFAALHFDVSVLEQYWSWSAGITVVSAKKDLILDDLIGFINNANITHIDLTPSLARLTHPETVPGLCRGVFITGGEQLKQEILDAWGSKAVIYNAYGPTEATIGVTTYQRVPQNGRPSNIGRQFRNVGSYVFHKDTEIPVLRGGVGELCISGKLVGKGYLNRPQLTDEKFPTLESFGERIYRTGDLVRILHDGCFEFLGRADDQVKLRGQRLELGEIDHVIRSVKNIHDVTTLVTKHTSSGKDVLVSFIVEEKIPDTPLVVLADNSSISTDARNMCRDKLPSYMVPSYFLKLPYIPLSPNNKAEAKLLKKLFSELSQEDLIKFGSAAVKRDLSKDSAGYQKLISSLAQFCNLDTATIEDSASVFDFGVDSITALSLSAFLVEKGMFAASPALILRNPIVADLAVALSTASSHDTSAEVKRTRQRVQAFEHKYKARVCRDLGAPPSDIEYIYPCSPLQQGMLAKTAVEDGEGAYFNVFKFHLKPGAVVSSVRAALNKLFEQEPILRTTFLHTPDGYVQVARRGISLPWNECSLAEDGRIEEVVESLWHAWVKENSDRVHTPIKATFVTDTDVNMIVLHIFHGLYDGTSFDLMMTRLTNLCNNVEAKAGPSFADALIHGPLRNHDESKQAWIEHLKGWSLSLLALPKEEKSVRPISHTRVLSASKLEALRSIKNVTMQSLLLAAWVSTLQKHSHGNATTGVIISGRSIAMPGVEETIGPLFNTLPFFANFSSAPTWHSLLQRCQDFNATVLEDPHVPLQQLQKWISNGKPLFESLFAYQIEDRRNQRDDLPWIVEDGGLNPDYSLALEVTKRGDDTMQLLLVAKNDLASETVLKNILDVFEDMLASVETDAAIPVQVETALVDALKSEQVKTIKENVEEVWGPAADVLRREVAALANISEAEIAPSTTWLELGLDSIDAVQFSARLKRHHMIISPSAIMKGWSMAYLSSLVMRLTNGDASCELDNLREIKSKLRRYVEATGFDMTEADDILPTTPLQDAMVSGMIESDFTWYFNHEVLKVAPGVDVDKLQAAWSRLFDMTPILRTGFVELVDPQASAVYAQVVYNSSPVISDVTVTSLEELQAIQEQSRAHASQGGAKRNLARVVRAQLGETTFFVLSISHALYDGWSLGLLHQDLKSLYYGESVGRPSPDQFLFKSNASLTPEAQGFWTNYLEKARPTIIPQVEPDSSSVVKAEGFSSTTLSDISRFCREQKISLQSLCQACWAIILARTTRSLDVVFGSILSGRDFDGAEDLLFPTMNTVAVRCILHGSISSFLHYMEDNLGELRSYQMVPLRKATTAAKAAGKDLFNSLFLLQKTPAESSSGSLFQSVEGSSGVDYPVCVEAAASGEVLEWTVACQGQSRDGRYAKELLAELHTTLDYVLRHAEEDVVSFSRAGTRICGSQPIALAEDDDEIPQIDKYTSYEWNATSLAIRKVLSQVSNIPADAIDASSTLYHLGLDSITAIKVSTLLKQRGIFLRPTQLVRSSSIAHMAEQVAALGSFEPPQTNLSWQAWTPPKNADADGILSEAGILKGQVEHVLPALPMQVYMMSIWQNTNGNIFYPEFTYKLSGPHTATDVRNAWARVVEQLPMLRTCLFATGQQDLPFIQVILKPGMSHAGVQPFVRIEIDQTPGSPETLLRLRIHHALYDGVSLPAITDTLLHHLKGDASRDAAPIHQWAHTVTARHDEAHMASRKAFWTQYLDGCSDASRPDNDMTGSRTSLFQEGAFSCASALTDLAARNGISLQSLVLAAYALSLPHTGQDVVLGVYLAGRADDRVPDTLPTLNLVPLRIKARHRDDHVLEMARRVHEDMQKITADDAAGNAQVGLWEVARWTGVKIDRFVNFLTLPAAAAAGKDESNVSLHLAPTSNPVKEDEAAMTTCIHDAAKNAVRDYYPDSVDVEFAVRNGHLDMGVFGPQTRITDEGAHELVRSVVQRLKKTVEACVH.

The tract at residues 21 to 453 is adenylation 1; it reads PGPTLLHQLV…MKTSGCHGAA (433 aa). The 74-residue stretch at 528 to 601 folds into the Carrier 1 domain; sequence DLKKSTEPEL…HLVSSIKIID (74 aa). Residue Ser-562 is modified to O-(pantetheine 4'-phosphoryl)serine. Residues 637 to 1045 form a condensation 1 region; the sequence is VQDIIPCTNL…SLLESMRSME (409 aa). The adenylation 2 stretch occupies residues 1101 to 1488; sequence TYTDLNRNAN…SRVSSATAAV (388 aa). Carrier domains lie at 1589-1666 and 2134-2210; these read EDWN…HSSH and SSWT…FENG. 2 positions are modified to O-(pantetheine 4'-phosphoryl)serine: Ser-1626 and Ser-2171. 2 condensation regions span residues 1706-2210 and 2243-2649; these read LQEA…FENG and LPCT…HQHD. The segment at 2709 to 3100 is adenylation 3; sequence TFAQLNSIGN…IRSVKNIHDV (392 aa). The Carrier 4 domain maps to 3203 to 3280; it reads SKDSAGYQKL…DLAVALSTAS (78 aa). Position 3240 is an O-(pantetheine 4'-phosphoryl)serine (Ser-3240). Residues 3319 to 3732 are condensation 4; sequence YIYPCSPLQQ…VQVETALVDA (414 aa). The Carrier 5 domain maps to 3747–3823; it reads EVWGPAADVL…YLSSLVMRLT (77 aa). Residue Ser-3784 is modified to O-(pantetheine 4'-phosphoryl)serine. Residues 3857–4258 are condensation 5; it reads DILPTTPLQD…YVLRHAEEDV (402 aa). In terms of domain architecture, Carrier 6 spans 4295-4368; it reads NATSLAIRKV…HMAEQVAALG (74 aa). The residue at position 4329 (Ser-4329) is an O-(pantetheine 4'-phosphoryl)serine. Residues 4504-4686 form a condensation 6 region; the sequence is ETLLRLRIHH…HEDMQKITAD (183 aa).

It belongs to the NRP synthetase family. Pantetheine 4'-phosphate is required as a cofactor.

The protein operates within siderophore biosynthesis. Nonribosomal peptide synthetase; part of the gene cluster that mediates the biosynthesis of at least 11 siderophores, including beauverichelin A, dimerumic acid (DA), Na-dimethyl coprogen (NADC), eleutherazine B, ferricrocin (FC), fusarinine A, fusarinine C (FsC), metachelin A, mevalonolactone, rhodotorulic acid (RA) and tenellin. This cocktail of siderophores for iron metabolism is essential for virulence, and more specifically for the fungal virulence in penetrating through the host cuticle. Siderophore synthesis is also involved in conidial germination under iron-deficient conditions. SIDC catalyzes the assembly of ferricrocin whereas SIDD catalyzes the assembly of fusarinine C. The protein is Nonribosomal peptide synthetase SIDC of Beauveria bassiana (strain ARSEF 2860) (White muscardine disease fungus).